Reading from the N-terminus, the 647-residue chain is MKYPAFSINSDTVHLTDNPLDDYQRLYLVSVLDRDSPPASFSAGLNIRKVNYKSSIAAQFTHPNFIISARDAGNGEEAAAQNVLNCFEYQFPNLQTIQSLVHEQTLLSQLASSATPHSALHLHDKNILMGKIILPSRSNKTPVSASPTKQEKKALSTASRENATSSLTKNQQFKLTKMDHNLINDKLINPNNCVIWSHDSGYVFMTGIWRLYQDVMKGLINLPRGDSVSTSQQQFFCKAEFEKILSFCFYNHSSFTSEESSSVLLSSSTSSPPKRRTSTGSTFLDANASSSSTSSTQANNYIDFHWNNIKPELRDLICQSYKDFLINELGPDQIDLPNLNPANFTKRIRGGYIKIQGTWLPMEISRLLCLRFCFPIRYFLVPIFGPDFPKDCESWYLAHQNVTFASSTTGAGAATAATAAANTSTNFTSTAVARPRQKPRPRPRQRSTSMSHSKAQKLVIEDALPSFDSFVENLGLSSNDKNFIKKNSKRQKSSTYTSQTSSPIGPRDPTVQILSNLASFYNTHGHRYSYPGNIYIPQQRYSLPPPNQLSSPQRQLNYTYDHIHPVPSQYQSPRHYNVPSSPIAPAPPTFPQPYGDDHYHFLKYASEVYKQQNQRPAHNTNTNMDTSFSPRANNSLNNFKFKTNSKQ.

Composition is skewed to polar residues over residues 138 to 148 and 156 to 170; these read SNKTPVSASPT and STAS…LTKN. Disordered regions lie at residues 138–170 and 264–295; these read SNKT…LTKN and LLSS…STSS. The span at 264 to 282 shows a compositional bias: low complexity; that stretch reads LLSSSTSSPPKRRTSTGST. In terms of domain architecture, HTH APSES-type spans 282-395; it reads TFLDANASSS…PDFPKDCESW (114 aa). Residues 318–339 constitute a DNA-binding region (H-T-H motif); sequence CQSYKDFLINELGPDQIDLPNL. A compositionally biased stretch (low complexity) spans 425–434; sequence TNFTSTAVAR. 3 disordered regions span residues 425 to 455, 485 to 508, and 612 to 647; these read TNFT…HSKA, KKNS…GPRD, and QNQR…NSKQ. Residues 435–445 show a composition bias toward basic residues; it reads PRQKPRPRPRQ. Positions 493 to 502 are enriched in low complexity; the sequence is SSTYTSQTSS.

Its subcellular location is the nucleus. Its function is as follows. Transcriptional repressor which binds to the consensus sequence 5'-GCCTCGA[G/A]G[C/A]-3'. Represses CLN1 transcription. This Saccharomyces cerevisiae (strain ATCC 204508 / S288c) (Baker's yeast) protein is Transcriptional repressor XBP1 (XBP1).